The sequence spans 316 residues: MGPVRHILNERKSRKIAAFLLINTAYMFVEFTSGFMSDSLGLISDACHMLFDCAALAIGLYASYIARLPANGLYNYGRGRFEVLSGYVNAVFLVLVGALIVLESFERILEPREISTSSLLTVSIGGLVVNVIGLVFFHEEHHHAHGEAHSCNGGLQSSENHNKSRNRHHIDHNMEGIFLHVLADTMGSVGVVISTLLIKYKGWLIADPICSVFISIMIVSSVLPLLRNSAEILLQRVPRSLEKDIKEALDDVMKIKGVIGVHNFHVWNLTNTDIVGTFHLHITTEADKSSIREKASDIFHEAGIQDLTIQIECVKR.

Residues 1–15 are Cytoplasmic-facing; it reads MGPVRHILNERKSRK. A helical membrane pass occupies residues 16–36; that stretch reads IAAFLLINTAYMFVEFTSGFM. At 37-45 the chain is on the vacuolar side; the sequence is SDSLGLISD. A helical membrane pass occupies residues 46–66; it reads ACHMLFDCAALAIGLYASYIA. Over 67-80 the chain is Cytoplasmic; that stretch reads RLPANGLYNYGRGR. The helical transmembrane segment at 81–101 threads the bilayer; that stretch reads FEVLSGYVNAVFLVLVGALIV. Over 102 to 116 the chain is Vacuolar; that stretch reads LESFERILEPREIST. The helical transmembrane segment at 117–137 threads the bilayer; that stretch reads SSLLTVSIGGLVVNVIGLVFF. Residues 138-176 lie on the Cytoplasmic side of the membrane; that stretch reads HEEHHHAHGEAHSCNGGLQSSENHNKSRNRHHIDHNMEG. Positions 147-166 are disordered; the sequence is EAHSCNGGLQSSENHNKSRN. Residues 177-197 traverse the membrane as a helical segment; sequence IFLHVLADTMGSVGVVISTLL. Topologically, residues 198 to 202 are vacuolar; it reads IKYKG. Residues 203-223 form a helical membrane-spanning segment; the sequence is WLIADPICSVFISIMIVSSVL. At 224 to 316 the chain is on the cytoplasmic side; it reads PLLRNSAEIL…LTIQIECVKR (93 aa).

This sequence belongs to the cation diffusion facilitator (CDF) transporter (TC 2.A.4) family. SLC30A subfamily.

The protein resides in the vacuole membrane. Its function is as follows. Involved in sequestration of excess metal in the cytoplasm into vacuoles to maintain metal homeostasis. This chain is Metal tolerance protein 8 (MTP8), found in Oryza sativa subsp. japonica (Rice).